The sequence spans 194 residues: CASP-like protein Ni6 (194 aa).

Residues 1–27 are Cytoplasmic-facing; the sequence is MSSMETEKGAVPTPQAPPVAPTDNKYR. Residues 28–48 form a helical membrane-spanning segment; sequence VVDVILRVLLLAASIASVVLM. Topologically, residues 49-75 are extracellular; sequence VTSKQTEIIVSPFGSRPNAAKFQNSPA. A helical membrane pass occupies residues 76–96; that stretch reads FIYLVAALSVAGLYSIITALV. Residues 97-109 are Cytoplasmic-facing; the sequence is SLSYMRKPIVPPK. A helical transmembrane segment spans residues 110–130; sequence LFWILLIHDVLLLGIVAAATG. The Extracellular segment spans residues 131–161; that stretch reads TAGGVGYIGLKGNTHVRWGKIRNVYDKFCRH. Residues 162–182 form a helical membrane-spanning segment; the sequence is VGASIIVSLFAAAVLVLLVFV. Residues 183-194 are Cytoplasmic-facing; that stretch reads NANSLYRRIPKY.

It belongs to the Casparian strip membrane proteins (CASP) family. Homodimer and heterodimers.

Its subcellular location is the cell membrane. This is CASP-like protein Ni6 (Ni6) from Beta vulgaris subsp. maritima (Sea beet).